The following is a 707-amino-acid chain: Polyribonucleotide nucleotidyltransferase (707 aa).

Residues Asp-485 and Asp-491 each contribute to the Mg(2+) site. In terms of domain architecture, KH spans 552–615 (PRITVINIPK…AAIKWIKGIV (64 aa)). In terms of domain architecture, S1 motif spans 621–689 (GEIYEGKVVK…DRGKVKLSMK (69 aa)).

The protein belongs to the polyribonucleotide nucleotidyltransferase family. Requires Mg(2+) as cofactor.

It is found in the cytoplasm. It catalyses the reaction RNA(n+1) + phosphate = RNA(n) + a ribonucleoside 5'-diphosphate. Its function is as follows. Involved in mRNA degradation. Catalyzes the phosphorolysis of single-stranded polyribonucleotides processively in the 3'- to 5'-direction. In Rhodospirillum centenum (strain ATCC 51521 / SW), this protein is Polyribonucleotide nucleotidyltransferase.